Here is a 685-residue protein sequence, read N- to C-terminus: Mannan-binding lectin serine protease 2 (685 aa).

Residues 1 to 19 (MRLLIVLGLLWSLVATLLG) form the signal peptide. Positions 20–137 (SKWPEPVFGR…TGFEAFYAAE (118 aa)) constitute a CUB 1 domain. Ca(2+) is bound by residues glutamate 67 and aspartate 75. A disulfide bond links cysteine 72 and cysteine 90. Asparagine 103 carries N-linked (GlcNAc...) asparagine glycosylation. Aspartate 120, serine 122, asparagine 123, aspartate 138, and valine 139 together coordinate Ca(2+). Residues 138 to 181 (DVDECRTSLGDSVPCDHYCHNYLGGYYCSCRVGYILHQNKHTCS) form the EGF-like; calcium-binding domain. 4 cysteine pairs are disulfide-bonded: cysteine 152–cysteine 165, cysteine 167–cysteine 180, cysteine 184–cysteine 211, and cysteine 241–cysteine 259. Position 158 is a (3R)-3-hydroxyasparagine (asparagine 158). Ca(2+) contacts are provided by tyrosine 159 and glycine 162. Positions 184–296 (CSGQVFTGRS…TGWKIHYTST (113 aa)) constitute a CUB 2 domain. An N-linked (GlcNAc...) asparagine glycan is attached at asparagine 285. Sushi domains follow at residues 298–363 (QPCP…ECSI) and 364–431 (IDCG…VCKP). Cystine bridges form between cysteine 300–cysteine 348, cysteine 328–cysteine 361, cysteine 366–cysteine 411, cysteine 396–cysteine 429, cysteine 433–cysteine 551, cysteine 597–cysteine 617, and cysteine 628–cysteine 659. Positions 444–683 (IIGGQPAKPG…YIPWIENIIN (240 aa)) constitute a Peptidase S1 domain. Active-site charge relay system residues include histidine 482 and aspartate 531. Serine 632 acts as the Charge relay system in catalysis. Residue asparagine 641 is glycosylated (N-linked (GlcNAc...) asparagine).

Belongs to the peptidase S1 family. Homodimer; disulfide-linked. Binds MBL2. Isoform 2 binds to MASP1. Binds SERPING1. Post-translationally, N-glycosylated. In terms of processing, the iron and 2-oxoglutarate dependent 3-hydroxylation of aspartate and asparagine is (R) stereospecific within EGF domains. As to expression, highly expressed in liver. Secreted in plasma.

The protein resides in the secreted. The catalysed reaction is Selective cleavage after Arg-223 in complement component C2 (-Ser-Leu-Gly-Arg-|-Lys-Ile-Gln-Ile) and after Arg-76 in complement component C4 (-Gly-Leu-Gln-Arg-|-Ala-Leu-Glu-Ile).. Functionally, serum protease that plays an important role in the activation of the complement system via mannose-binding lectin. After activation by auto-catalytic cleavage it cleaves C2 and C4, leading to their activation and to the formation of C3 convertase. This is Mannan-binding lectin serine protease 2 (Masp2) from Rattus norvegicus (Rat).